The primary structure comprises 238 residues: Probable transcriptional regulatory protein MGAS2096_Spy0287 (238 aa).

The protein belongs to the TACO1 family. YeeN subfamily.

It localises to the cytoplasm. The sequence is that of Probable transcriptional regulatory protein MGAS2096_Spy0287 from Streptococcus pyogenes serotype M12 (strain MGAS2096).